Reading from the N-terminus, the 102-residue chain is Integration host factor subunit beta (102 aa).

The protein belongs to the bacterial histone-like protein family. Heterodimer of an alpha and a beta chain.

Its function is as follows. This protein is one of the two subunits of integration host factor, a specific DNA-binding protein that functions in genetic recombination as well as in transcriptional and translational control. This chain is Integration host factor subunit beta (ihfB), found in Rhizobium radiobacter (Agrobacterium tumefaciens).